A 185-amino-acid chain; its full sequence is NEDD8-conjugating enzyme UBE2F (185 aa).

The interaction with uba3 stretch occupies residues 1 to 29; that stretch reads MLTLASKLKREEGVRAGRTPAGSNDAAHR. A UBC core domain is found at 32–185; that stretch reads IRDRLLIKEV…VQDFIKNYAR (154 aa). Cysteine 116 functions as the Glycyl thioester intermediate in the catalytic mechanism.

Belongs to the ubiquitin-conjugating enzyme family. UBE2F subfamily.

The catalysed reaction is [E1 NEDD8-activating enzyme]-S-[NEDD8 protein]-yl-L-cysteine + [E2 NEDD8-conjugating enzyme]-L-cysteine = [E1 NEDD8-activating enzyme]-L-cysteine + [E2 NEDD8-conjugating enzyme]-S-[NEDD8-protein]-yl-L-cysteine.. It participates in protein modification; protein neddylation. Functionally, accepts the ubiquitin-like protein NEDD8 from the UBA3-NAE1 E1 complex and catalyzes its covalent attachment to other proteins. Together with the E3 ubiquitin ligase rnf7/rbx2, specifically neddylates cullin-5 (cul5). Does not neddylate cul1, cul2, cul3, cul4a or cul4b. This is NEDD8-conjugating enzyme UBE2F (ube2f) from Danio rerio (Zebrafish).